The sequence spans 331 residues: Cysteine and histidine-rich domain-containing protein 1 (331 aa).

Zn(2+) is bound by residues cysteine 5, cysteine 10, cysteine 24, histidine 27, cysteine 42, cysteine 43, cysteine 59, histidine 64, cysteine 157, cysteine 162, cysteine 176, histidine 179, cysteine 194, cysteine 195, cysteine 211, and histidine 216. CHORD domains are found at residues 5–64 (CYNR…KGLH) and 157–216 (CKNA…TGTH). Positions 227-316 (VVPCRHDWHQ…AEPLLWASLE (90 aa)) constitute a CS domain.

Regulates centrosome duplication. The chain is Cysteine and histidine-rich domain-containing protein 1 (CHORDC1) from Gallus gallus (Chicken).